A 372-amino-acid polypeptide reads, in one-letter code: tRNA-specific 2-thiouridylase MnmA (372 aa).

ATP contacts are provided by residues 7–14 (GLSGGVDS) and Met-33. The segment at 104–106 (NPD) is interaction with target base in tRNA. Cys-109 acts as the Nucleophile in catalysis. A disulfide bridge connects residues Cys-109 and Cys-202. Gly-134 is an ATP binding site. An interaction with tRNA region spans residues 152–154 (KDQ). Cys-202 serves as the catalytic Cysteine persulfide intermediate. Residues 310–311 (RY) form an interaction with tRNA region.

This sequence belongs to the MnmA/TRMU family.

Its subcellular location is the cytoplasm. It catalyses the reaction S-sulfanyl-L-cysteinyl-[protein] + uridine(34) in tRNA + AH2 + ATP = 2-thiouridine(34) in tRNA + L-cysteinyl-[protein] + A + AMP + diphosphate + H(+). Its function is as follows. Catalyzes the 2-thiolation of uridine at the wobble position (U34) of tRNA, leading to the formation of s(2)U34. The protein is tRNA-specific 2-thiouridylase MnmA of Mesomycoplasma hyopneumoniae (strain 232) (Mycoplasma hyopneumoniae).